The chain runs to 504 residues: Deoxyguanosinetriphosphate triphosphohydrolase (504 aa).

Residues Arg-66–Cys-273 enclose the HD domain.

It belongs to the dGTPase family. Type 1 subfamily. In terms of assembly, homotetramer. Mg(2+) is required as a cofactor.

The catalysed reaction is dGTP + H2O = 2'-deoxyguanosine + triphosphate + H(+). DGTPase preferentially hydrolyzes dGTP over the other canonical NTPs. The polypeptide is Deoxyguanosinetriphosphate triphosphohydrolase (Citrobacter koseri (strain ATCC BAA-895 / CDC 4225-83 / SGSC4696)).